The sequence spans 65 residues: Large ribosomal subunit protein bL35 (65 aa).

The segment at 1–21 (MPKMKTKSGAAKRFTVRAGGT) is disordered.

The protein belongs to the bacterial ribosomal protein bL35 family.

In Nitrosospira multiformis (strain ATCC 25196 / NCIMB 11849 / C 71), this protein is Large ribosomal subunit protein bL35.